We begin with the raw amino-acid sequence, 377 residues long: Chaperone protein DnaJ (377 aa).

Residues 4–69 (DYYEALGVER…QKRAAYDRFG (66 aa)) enclose the J domain. A CR-type zinc finger spans residues 135–213 (GKTAQIRVPT…CHGQGRVTQE (79 aa)). Zn(2+)-binding residues include cysteine 148, cysteine 151, cysteine 165, cysteine 168, cysteine 187, cysteine 190, cysteine 201, and cysteine 204. CXXCXGXG motif repeat units lie at residues 148 to 155 (CDECSGSG), 165 to 172 (CTMCSGSG), 187 to 194 (CPTCNGRG), and 201 to 208 (CGKCHGQG).

Belongs to the DnaJ family. As to quaternary structure, homodimer. Requires Zn(2+) as cofactor.

The protein localises to the cytoplasm. Functionally, participates actively in the response to hyperosmotic and heat shock by preventing the aggregation of stress-denatured proteins and by disaggregating proteins, also in an autonomous, DnaK-independent fashion. Unfolded proteins bind initially to DnaJ; upon interaction with the DnaJ-bound protein, DnaK hydrolyzes its bound ATP, resulting in the formation of a stable complex. GrpE releases ADP from DnaK; ATP binding to DnaK triggers the release of the substrate protein, thus completing the reaction cycle. Several rounds of ATP-dependent interactions between DnaJ, DnaK and GrpE are required for fully efficient folding. Also involved, together with DnaK and GrpE, in the DNA replication of plasmids through activation of initiation proteins. The polypeptide is Chaperone protein DnaJ (Brucella anthropi (strain ATCC 49188 / DSM 6882 / CCUG 24695 / JCM 21032 / LMG 3331 / NBRC 15819 / NCTC 12168 / Alc 37) (Ochrobactrum anthropi)).